Here is a 420-residue protein sequence, read N- to C-terminus: Septin-8-A (420 aa).

A Septin-type G domain is found at 39-305 (QGFCFNILCV…ELYRRCKLEE (267 aa)). Residues 49-56 (GETGIGKS) are G1 motif. GTP-binding positions include 49–56 (GETGIGKS), Gly-104, 185–193 (KADTISKSE), Gly-239, and Arg-254. The segment at 101-104 (DTVG) is G3 motif. The segment at 184 to 187 (AKAD) is G4 motif. Positions 321-407 (QETYEAKRKE…RRKVAAETLS (87 aa)) form a coiled coil. A disordered region spans residues 393-420 (MNAFNRRKVAAETLSLSQPLKKDKDKKN).

Belongs to the TRAFAC class TrmE-Era-EngA-EngB-Septin-like GTPase superfamily. Septin GTPase family.

In Danio rerio (Zebrafish), this protein is Septin-8-A (sept8a).